Reading from the N-terminus, the 476-residue chain is Exodeoxyribonuclease 7 large subunit (476 aa).

This sequence belongs to the XseA family. In terms of assembly, heterooligomer composed of large and small subunits.

It is found in the cytoplasm. The enzyme catalyses Exonucleolytic cleavage in either 5'- to 3'- or 3'- to 5'-direction to yield nucleoside 5'-phosphates.. Functionally, bidirectionally degrades single-stranded DNA into large acid-insoluble oligonucleotides, which are then degraded further into small acid-soluble oligonucleotides. In Bartonella tribocorum (strain CIP 105476 / IBS 506), this protein is Exodeoxyribonuclease 7 large subunit.